We begin with the raw amino-acid sequence, 461 residues long: Coronin-1A (461 aa).

S2 is subject to N-acetylserine. Position 2 is a phosphoserine; by PKC (S2). WD repeat units lie at residues 13 to 63 (HVFG…LVLP), 73 to 110 (NVPL…MVWE), 123 to 160 (PVVT…LVWD), 164 to 204 (GAAV…RVIE), 207 to 251 (KGTV…ALWD), 258 to 296 (PLSL…RYFE), and 302 to 349 (PFLH…EPIA). Residues 407–418 (NRGLDSARRRAT) show a composition bias toward basic and acidic residues. Residues 407 to 431 (NRGLDSARRRATPEPSSTLSSDTVS) are disordered. S412 carries the phosphoserine; by PKC modification. At T418 the chain carries Phosphothreonine. The span at 420–430 (EPSSTLSSDTV) shows a compositional bias: polar residues. S422 is subject to Phosphoserine. A coiled-coil region spans residues 425–461 (LSSDTVSRLEEDVRNLNAIVQKLQERLDRLEETVQAK).

It belongs to the WD repeat coronin family. Binds actin. In terms of processing, phosphorylation at Ser-412 by PKC strongly down-regulates the association with actin. Post-translationally, polyubiquitinated by RNF128 with 'Lys-48'-linked chains, leading to proteasomal degradation.

Its subcellular location is the cytoplasm. The protein localises to the cytoskeleton. It localises to the cell cortex. The protein resides in the cytoplasmic vesicle. It is found in the phagosome membrane. Its function is as follows. May be a crucial component of the cytoskeleton of highly motile cells, functioning both in the invagination of large pieces of plasma membrane, as well as in forming protrusions of the plasma membrane involved in cell locomotion. The sequence is that of Coronin-1A (Coro1a) from Rattus norvegicus (Rat).